Here is a 63-residue protein sequence, read N- to C-terminus: Alpha-conotoxin-like Sm1.3 (63 aa).

The N-terminal stretch at 1-16 is a signal peptide; it reads MFTVFLLVVLATTVVS. Residues 17-43 constitute a propeptide that is removed on maturation; it reads SPSDRASDGRNAAANEKASDVIALALK. Disulfide bonds link Cys45–Cys51 and Cys46–Cys59. Met58 carries the methionine sulfoxide; partial modification. Cys59 is subject to Cysteine amide; partial.

It belongs to the conotoxin A superfamily. In terms of tissue distribution, expressed by the venom duct.

Its subcellular location is the secreted. In terms of biological role, alpha-conotoxins act on postsynaptic membranes, they bind to the nicotinic acetylcholine receptors (nAChR) and thus inhibit them. The polypeptide is Alpha-conotoxin-like Sm1.3 (Conus stercusmuscarum (Fly-specked cone)).